The primary structure comprises 584 residues: (+)-larreatricin hydroxylase, chloroplastic (584 aa).

The transit peptide at 1-32 (MASLSSQSKLLATPYSFPYHTKPSRVSLRRVS) directs the protein to the chloroplast. A thylakoid-targeting transit peptide spans 33–79 (CKASNDNKDKPNDQEKTFSIDRRNMLIGLGGLYGASNVFPSNQSTLA). 2 cysteine pairs are disulfide-bonded: Cys-91–Cys-106 and Cys-105–Cys-168. Cu cation contacts are provided by His-167, His-188, His-197, His-319, His-323, and His-353. Positions 171-188 (CNGAYDQVGFPDVNIQVH) form a cross-link, 2'-(S-cysteinyl)-histidine (Cys-His). Residues 432–584 (RLRSKATTTT…KIEFVRDEED (153 aa)) constitute a propeptide, removed in mature form.

The protein belongs to the tyrosinase family. Cu(2+) is required as a cofactor.

The protein localises to the plastid. The protein resides in the chloroplast thylakoid lumen. It carries out the reaction (+)-larreatricin + AH2 + O2 = (+)-3'-hydroxylarreatricin + A + H2O. Functionally, enantio-specific polyphenol oxidase involved in aromatic ring hydroxylation. Involved in the biosynthesis of the creosote bush 8-8' linked lignans. Has a strong preference for the 3' position of (+)-larreatricin. The polypeptide is (+)-larreatricin hydroxylase, chloroplastic (Larrea tridentata (Creosote bush)).